The primary structure comprises 1313 residues: Target of rapamycin complex 1 subunit mip1 (1313 aa).

The segment at 1-35 is disordered; sequence MNDRISEVSGSSRARRSVLSYGTTETGSDRYTENS. S834, S837, and S882 each carry phosphoserine. 7 WD repeats span residues 986–1029, 1033–1074, 1087–1126, 1130–1170, 1176–1216, 1219–1259, and 1268–1308; these read TFNN…NSFK, SATT…KVEL, GDRN…CYAN, RSSN…RDSL, EHSS…SLQT, TDNS…NTFR, and PKPS…IHTD.

This sequence belongs to the WD repeat RAPTOR family. In terms of assembly, the target of rapamycin complex 1 (TORC1) is composed of at least mip1, pop3/wat1, tco89, toc1 and tor2.

It is found in the cytoplasm. In terms of biological role, component of TORC1, which regulates multiple cellular processes to control cell growth in response to environmental signals. Tor2 is essential for growth. Nutrient limitation and environmental stress signals cause inactivation of TORC1. Active TORC1 positively controls cell growth and ribosome biogenesis by regulating ribosomal protein gene expression. TORC1 negatively controls G1 cell-cycle arrest, sexual development and amino acid uptake. Represses mating, meiosis and sporulation efficiency by interfering with the functions of the transcription factor ste11 and the meiosis-promoting RNA-binding protein mei2. The sequence is that of Target of rapamycin complex 1 subunit mip1 from Schizosaccharomyces pombe (strain 972 / ATCC 24843) (Fission yeast).